The sequence spans 307 residues: Putative transcription factor bHLH086 (307 aa).

Disordered regions lie at residues Met1–Asn49 and His167–Ala215. 2 stretches are compositionally biased toward polar residues: residues Asn12–Asn28 and Gly183–Asn197. A basic motif region spans residues Ser207–Arg220. In terms of domain architecture, bHLH spans Ser207–Leu256. The segment at Glu221 to Leu256 is helix-loop-helix motif.

Homodimer. Forms heterodimers with RHD6. Interacts with TIFY10B/JAZ2, TIFY6A/JAZ4, TIFY5A/JAZ8, TIFY7/JAZ9 and TIFY9/JAZ10.

It localises to the nucleus. Functionally, transcription factor that is specifically required for the development of root hairs. Acts with RHD6 to positively regulate root hair development. Acts downstream of genes that regulate epidermal pattern formation, such as GL2. Acts with RHD6 as transcription factor that integrates a jasmonate (JA) signaling pathway that stimulates root hair growth. This is Putative transcription factor bHLH086 from Arabidopsis thaliana (Mouse-ear cress).